Reading from the N-terminus, the 316-residue chain is Homoserine kinase (316 aa).

Residue Pro-97–Ala-107 participates in ATP binding.

This sequence belongs to the GHMP kinase family. Homoserine kinase subfamily.

It localises to the cytoplasm. The catalysed reaction is L-homoserine + ATP = O-phospho-L-homoserine + ADP + H(+). Its pathway is amino-acid biosynthesis; L-threonine biosynthesis; L-threonine from L-aspartate: step 4/5. Its function is as follows. Catalyzes the ATP-dependent phosphorylation of L-homoserine to L-homoserine phosphate. The polypeptide is Homoserine kinase (Mycobacterium tuberculosis (strain ATCC 25618 / H37Rv)).